A 208-amino-acid polypeptide reads, in one-letter code: Uracil phosphoribosyltransferase (208 aa).

5-phospho-alpha-D-ribose 1-diphosphate contacts are provided by residues Arg-78, Arg-103, and 130-138; that span reads DPMLATGGS. Uracil contacts are provided by residues Ile-193 and 198–200; that span reads GDA. A 5-phospho-alpha-D-ribose 1-diphosphate-binding site is contributed by Asp-199.

The protein belongs to the UPRTase family. It depends on Mg(2+) as a cofactor.

It catalyses the reaction UMP + diphosphate = 5-phospho-alpha-D-ribose 1-diphosphate + uracil. It functions in the pathway pyrimidine metabolism; UMP biosynthesis via salvage pathway; UMP from uracil: step 1/1. Allosterically activated by GTP. In terms of biological role, catalyzes the conversion of uracil and 5-phospho-alpha-D-ribose 1-diphosphate (PRPP) to UMP and diphosphate. This Actinobacillus pleuropneumoniae serotype 5b (strain L20) protein is Uracil phosphoribosyltransferase.